We begin with the raw amino-acid sequence, 190 residues long: MSISRTVFGIAATAALSAALVACSPPHQQDSPVQRTNEILTTSQNPTSASSTSTSSATTTSSAPVEEDVEIVVSPAALVDGEQVTFEISGLDPEGGYYAAICDSVANPGNPVPSCTGEMADFTSQAWLSNSQPGATVEIAEDGTATVELEATATGTGLDCTTQACVAKVFGDHTEGFRDVAEVPVTFAAA.

The N-terminal stretch at 1-22 is a signal peptide; it reads MSISRTVFGIAATAALSAALVA. The N-palmitoyl cysteine moiety is linked to residue cysteine 23. Cysteine 23 carries the S-diacylglycerol cysteine lipid modification. Residues 43–68 are disordered; it reads SQNPTSASSTSTSSATTTSSAPVEED. The segment covering 47–63 has biased composition (low complexity); the sequence is TSASSTSTSSATTTSSA.

It is found in the cell membrane. Functionally, is necessary for biosynthesis of the 4-methyl-5-(beta-hydroxyethyl)thiazol component from which thiamine is formed. This is Thiamine biosynthesis protein X (thiX) from Corynebacterium glutamicum (strain ATCC 13032 / DSM 20300 / JCM 1318 / BCRC 11384 / CCUG 27702 / LMG 3730 / NBRC 12168 / NCIMB 10025 / NRRL B-2784 / 534).